A 315-amino-acid polypeptide reads, in one-letter code: Malate dehydrogenase (315 aa).

NAD(+)-binding positions include 11 to 16 (GAGHVG) and Asp-35. Positions 84 and 90 each coordinate substrate. NAD(+) is bound by residues Asn-97 and 120 to 122 (VTN). Asn-122 and Arg-153 together coordinate substrate. The Proton acceptor role is filled by His-177.

It belongs to the LDH/MDH superfamily. MDH type 3 family.

The catalysed reaction is (S)-malate + NAD(+) = oxaloacetate + NADH + H(+). In terms of biological role, catalyzes the reversible oxidation of malate to oxaloacetate. This Thermosulfidibacter takaii (strain DSM 17441 / JCM 13301 / NBRC 103674 / ABI70S6) protein is Malate dehydrogenase.